The following is a 175-amino-acid chain: Large ribosomal subunit protein uL10 (175 aa).

This sequence belongs to the universal ribosomal protein uL10 family. As to quaternary structure, part of the ribosomal stalk of the 50S ribosomal subunit. The N-terminus interacts with L11 and the large rRNA to form the base of the stalk. The C-terminus forms an elongated spine to which L12 dimers bind in a sequential fashion forming a multimeric L10(L12)X complex.

Functionally, forms part of the ribosomal stalk, playing a central role in the interaction of the ribosome with GTP-bound translation factors. The chain is Large ribosomal subunit protein uL10 from Prochlorococcus marinus (strain MIT 9215).